The sequence spans 1049 residues: Cilia- and flagella-associated protein 337 (1049 aa).

An EF-hand domain is found at 81 to 116 (GTKEEYGELFDKVDVAQDGFINWDKLTSFILLELYE). WD repeat units follow at residues 138–177 (KHKD…QETF), 358–397 (NIAQ…KPVG), 401–440 (GHSA…SIQR), 487–528 (SHEK…KQFT), 531–570 (HGNA…HHTL), and 633–671 (QHHD…AHHV). The tract at residues 691 to 712 (LLSAGRSQPSHPMADHSTTGVR) is disordered. Residues 695 to 711 (GRSQPSHPMADHSTTGV) show a composition bias toward polar residues. WD repeat units follow at residues 719-766 (EGKN…LLAE), 769-809 (AHSG…LNSS), and 825-866 (PHED…VWIF).

The protein belongs to the CFAP337 family. In terms of assembly, associates with components of the nexin-dynein regulatory complex (N-DRC) and the CFAP184:CFAP263 complex.

The protein resides in the cell projection. It is found in the cilium. In terms of biological role, associates with components of the nexin-dynein regulatory complex (N-DRC), a key regulator of ciliary/flagellar motility, and might act as an inner dynein arm (IDA) hub or linkage. The chain is Cilia- and flagella-associated protein 337 from Homo sapiens (Human).